Here is a 145-residue protein sequence, read N- to C-terminus: 3-hydroxyacyl-[acyl-carrier-protein] dehydratase FabZ (145 aa).

H51 is a catalytic residue.

This sequence belongs to the thioester dehydratase family. FabZ subfamily.

It localises to the cytoplasm. It carries out the reaction a (3R)-hydroxyacyl-[ACP] = a (2E)-enoyl-[ACP] + H2O. In terms of biological role, involved in unsaturated fatty acids biosynthesis. Catalyzes the dehydration of short chain beta-hydroxyacyl-ACPs and long chain saturated and unsaturated beta-hydroxyacyl-ACPs. The sequence is that of 3-hydroxyacyl-[acyl-carrier-protein] dehydratase FabZ from Staphylococcus saprophyticus subsp. saprophyticus (strain ATCC 15305 / DSM 20229 / NCIMB 8711 / NCTC 7292 / S-41).